The primary structure comprises 455 residues: SH3 domain-binding protein 5 (455 aa).

Residues 1–12 are compositionally biased toward basic and acidic residues; the sequence is MDAALKRSRSEE. Residues 1–63 are disordered; sequence MDAALKRSRS…QSTDDINRRE (63 aa). The segment covering 22–41 has biased composition (acidic residues); that stretch reads DEEEEEEEGMEQGLEEEEEV. Residues 31 to 265 form a sufficient for interaction with RAB11A and for guanine nucleotide exchange activity region; that stretch reads MEQGLEEEEE…EIHERRRSSA (235 aa). The segment covering 42–51 has biased composition (basic and acidic residues); sequence DPRIQGELEK. 4 coiled-coil regions span residues 44–90, 97–145, 154–200, and 211–255; these read RIQG…LVKK, DSKP…RLLE, AWQE…LEKK, and YFEL…MISD. Disordered regions lie at residues 259-293 and 306-345; these read ERRRSSAMGPRGCGVGAEGSSTSVEDLPGSKPEPD and SCSNFVSEDDSETQSVSSFSSGPTSPSEMPDQFPAVVRPG. Residues 306–317 show a composition bias toward acidic residues; the sequence is SCSNFVSEDDSE. Positions 320 to 332 are enriched in low complexity; that stretch reads SVSSFSSGPTSPS. Residue Ser-351 is modified to Phosphoserine; by MAPK12 and MAPK9. The segment at 369–435 is disordered; sequence SECSGASSPE…ALENRMKQLS (67 aa). Residues Ser-375 and Ser-376 each carry the phosphoserine modification. Positions 380-396 are enriched in basic and acidic residues; it reads EVERGDRAEGAENKTSD. Residues 403–421 are compositionally biased toward low complexity; sequence GLSSSSGSGGSSKSQSSTS. 2 positions are modified to phosphoserine: Ser-418 and Ser-421.

This sequence belongs to the SH3BP5 family. In terms of assembly, interacts with BTK. Interacts with all isoforms of MAPK8, MAPK9, MAPK10 and MAPK12. Interacts with GDP-bound and nucleotide-free forms of RAB11A. In terms of tissue distribution, highly expressed in testis and ovaries. It is also expressed in a variety of tissues including spleen, lymph node, thymus, bone marrow, fetal liver, colon, small intestine and prostate.

The protein localises to the cytoplasmic vesicle membrane. It is found in the mitochondrion. Functionally, functions as a guanine nucleotide exchange factor (GEF) with specificity for RAB11A and RAB25. Inhibits the auto- and transphosphorylation activity of BTK. Plays a negative regulatory role in BTK-related cytoplasmic signaling in B-cells. May be involved in BCR-induced apoptotic cell death. The chain is SH3 domain-binding protein 5 (SH3BP5) from Homo sapiens (Human).